Here is a 427-residue protein sequence, read N- to C-terminus: Gamma-glutamyl phosphate reductase (427 aa).

This sequence belongs to the gamma-glutamyl phosphate reductase family.

It is found in the cytoplasm. The enzyme catalyses L-glutamate 5-semialdehyde + phosphate + NADP(+) = L-glutamyl 5-phosphate + NADPH + H(+). Its pathway is amino-acid biosynthesis; L-proline biosynthesis; L-glutamate 5-semialdehyde from L-glutamate: step 2/2. Catalyzes the NADPH-dependent reduction of L-glutamate 5-phosphate into L-glutamate 5-semialdehyde and phosphate. The product spontaneously undergoes cyclization to form 1-pyrroline-5-carboxylate. This chain is Gamma-glutamyl phosphate reductase, found in Brucella anthropi (strain ATCC 49188 / DSM 6882 / CCUG 24695 / JCM 21032 / LMG 3331 / NBRC 15819 / NCTC 12168 / Alc 37) (Ochrobactrum anthropi).